Reading from the N-terminus, the 242-residue chain is ATP synthase subunit a (242 aa).

5 helical membrane-spanning segments follow: residues 21–41 (LASVLMVVITAILVFILAIVC), 83–103 (AVTLILFIFVANMLGLPFAIV), 118–137 (ATVTLTLSTTMILLTHYYGI), 175–195 (LYGNIFAGELLLGLLASLFFE), and 198–218 (AWGWIISIPGLIVWQAFSIFV).

Belongs to the ATPase A chain family. F-type ATPases have 2 components, CF(1) - the catalytic core - and CF(0) - the membrane proton channel. CF(1) has five subunits: alpha(3), beta(3), gamma(1), delta(1), epsilon(1). CF(0) has three main subunits: a(1), b(2) and c(9-12). The alpha and beta chains form an alternating ring which encloses part of the gamma chain. CF(1) is attached to CF(0) by a central stalk formed by the gamma and epsilon chains, while a peripheral stalk is formed by the delta and b chains.

The protein resides in the cell membrane. In terms of biological role, key component of the proton channel; it plays a direct role in the translocation of protons across the membrane. In Staphylococcus epidermidis (strain ATCC 35984 / DSM 28319 / BCRC 17069 / CCUG 31568 / BM 3577 / RP62A), this protein is ATP synthase subunit a.